We begin with the raw amino-acid sequence, 371 residues long: Vasopressin V2 receptor (371 aa).

Positions 1–30 are disordered; the sequence is MLMASTTSAVPGHPSLPSLPSNSSQERPLD. Residues 1–38 lie on the Extracellular side of the membrane; that stretch reads MLMASTTSAVPGHPSLPSLPSNSSQERPLDTRDPLLAR. The span at 15–24 shows a compositional bias: low complexity; sequence SLPSLPSNSS. An N-linked (GlcNAc...) asparagine glycan is attached at Asn-22. A helical membrane pass occupies residues 39-63; sequence AELALLSIVFVAVALSNGLVLAALA. The Cytoplasmic portion of the chain corresponds to 64–77; the sequence is RRGRRGHWAPIHVF. Residues 78–98 form a helical membrane-spanning segment; the sequence is IGHLCLADLAVALFQVLPQLA. The Extracellular portion of the chain corresponds to 99-113; sequence WKATDRFRGPDALCR. Residues 114–135 form a helical membrane-spanning segment; sequence AVKYLQMVGMYASSYMILAMTL. Residues 136–159 lie on the Cytoplasmic side of the membrane; sequence DRHRAICRPMLAYRHGSGAHWNRP. A helical transmembrane segment spans residues 160-180; that stretch reads VLVAWAFSLLLSLPQLFIFAQ. Over 181–200 the chain is Extracellular; that stretch reads RNVEGGSGVTDCWACFAEPW. Residues 201-220 form a helical membrane-spanning segment; sequence GRRTYVTWIALMVFVAPTLG. The Cytoplasmic portion of the chain corresponds to 221–271; it reads IAACQVLIFREIHASLVPGPSERPGGRRRGRRTGSPGEGAHVSAAVAKTVR. The segment at 240-259 is disordered; that stretch reads PSERPGGRRRGRRTGSPGEG. The helical transmembrane segment at 272 to 293 threads the bilayer; that stretch reads MTLVIVVVYVLCWAPFFLVQLW. Residues 294-308 are Extracellular-facing; the sequence is AAWDPEAPLEGAPFV. A helical transmembrane segment spans residues 309–328; sequence LLMLLASLNSCTNPWIYASF. The Cytoplasmic portion of the chain corresponds to 329 to 371; it reads SSSVSSELRSLLCCARGRTPPSLGPQDESCTTASSSLAKDTSS. 2 S-palmitoyl cysteine lipidation sites follow: Cys-341 and Cys-342. Residues 349 to 371 form a disordered region; the sequence is PSLGPQDESCTTASSSLAKDTSS. A compositionally biased stretch (polar residues) spans 356-371; that stretch reads ESCTTASSSLAKDTSS.

This sequence belongs to the G-protein coupled receptor 1 family. Vasopressin/oxytocin receptor subfamily. Interacts with ARRDC4. Identified in a complex containing at least ARRDC4, V2R and HGS. Interacts with TMEM147. Kidney.

The protein resides in the cell membrane. Receptor for arginine vasopressin. The activity of this receptor is mediated by G proteins which activate adenylate cyclase. Involved in renal water reabsorption. In Homo sapiens (Human), this protein is Vasopressin V2 receptor (AVPR2).